Reading from the N-terminus, the 970-residue chain is Type III restriction-modification enzyme EcoPI Res subunit (970 aa).

Residues 75-540 (ARSNVIDVSM…EVGRGLRLPV (466 aa)) form a helicase-like domain region. An endonuclease domain region spans residues 894-918 (TYSPDFAYVVKTAEGDYLNFIIETK).

Belongs to the type III restriction-modification system Res protein family. As to quaternary structure, a heterotetramer with stoichiometry Res(2)Mod(2). Requires Mg(2+) as cofactor. The cofactor is S-adenosyl-L-methionine.

It catalyses the reaction Endonucleolytic cleavage of DNA to give specific double-stranded fragments with terminal 5'-phosphates.. A type III restriction enzyme that recognizes 2 inversely oriented double-stranded sequences 5'-AGACC-3' and cleaves DNA 25-27 base pairs downstream of one site, producing a single-strand 5' protrusion of two nucleotides. DNA restriction requires both the Res and Mod subunits. DNA topology affects its action; relaxed and negatively supercoiled DNA are digested but positively supercoiled DNA is not a good substrate. After binding to one recognition site undergoes random one-dimensional diffusion along DNA until it collides with a stationary enzyme bound to the second DNA site, which is when DNA cleavage occurs. This Enterobacteriaceae (Bacteriophage P1) protein is Type III restriction-modification enzyme EcoPI Res subunit.